We begin with the raw amino-acid sequence, 58 residues long: Metallothionein (58 aa).

The segment at Met-1–Ser-29 is beta. Residues Cys-5, Cys-6, Cys-10, Cys-12, Cys-17, Cys-21, Cys-23, Cys-26, Cys-28, Cys-31, Cys-34, Cys-38, Cys-40, Cys-46, Cys-50, Cys-54, Cys-56, and Cys-57 each coordinate a divalent metal cation. The alpha stretch occupies residues Pro-30 to Pro-58.

Functionally, metallothioneins have a high content of cysteine residues that bind various heavy metals. Class I MTS in crustacea are involved in the sequestration of elevated levels of heavy-metal ions. In Astacus astacus (Noble crayfish), this protein is Metallothionein.